Reading from the N-terminus, the 471-residue chain is Ribonuclease 3 (471 aa).

Residues 1–10 (MGSKVAGKKK) show a composition bias toward basic residues. Disordered stretches follow at residues 1-29 (MGSKVAGKKKTQNDNKLDNENGSQQRENI) and 168-189 (NLNEKEDEEEDEGEDSYDPTKA). The span at 20-29 (ENGSQQRENI) shows a compositional bias: polar residues. Over residues 172-184 (KEDEEEDEGEDSY) the composition is skewed to acidic residues. Residues 227 to 331 (LSGSEMINAH…YIGGLMEDDP (105 aa)) form the RNase III domain. In terms of domain architecture, DRBM spans 369–437 (NAKRQLYSLI…AENALRDKKM (69 aa)). The segment at 451–471 (SESVLKDPSQKNKKRKFSDTS) is disordered. The span at 461–471 (KNKKRKFSDTS) shows a compositional bias: basic residues.

The catalysed reaction is Endonucleolytic cleavage to 5'-phosphomonoester.. In terms of biological role, dsRNA-specific nuclease that cleaves eukaryotic pre-ribosomal RNA at the U3 snoRNP-dependent A0 site in the 5'-external transcribed spacer (ETS) and in the 3'-ETS. In vitro, cleaves synthetic 5'-ETS RNA A0 site in the absence of snoRNA or other factors. Has an essential growth function in addition to pre-rRNA processing. The chain is Ribonuclease 3 (RNT1) from Saccharomyces cerevisiae (strain ATCC 204508 / S288c) (Baker's yeast).